Here is a 533-residue protein sequence, read N- to C-terminus: RNA end formation protein 2 (533 aa).

Disordered regions lie at residues 187–254 (SNST…SSMK), 260–279 (LFNK…SKKK), and 321–344 (SSST…PLKK). The segment covering 206–222 (KIKDSEKEKEKEKDKSK) has biased composition (basic and acidic residues). Low complexity predominate over residues 242–252 (SSPSPTASTSS). Over residues 321-338 (SSSTSGSSTTTVATPASS) the composition is skewed to low complexity.

In terms of assembly, interacts with FIR1. Component of the cleavage and polyadenylation factor (CPF) complex, which is composed of PTI1, SYC1, SSU72, GLC7, MPE1, REF2, PFS2, PTA1, YSH1/BRR5, SWD2, CFT2/YDH1, YTH1, CFT1/YHH1, FIP1 and PAP1. Component of the APT complex, which is a subcomplex of CPF, and is composed of PTI1, SYC1, SSU72, GLC7, REF2, PTA1 and SWD2.

The protein resides in the nucleus. Its function is as follows. RNA-binding component of the cleavage and polyadenylation factor (CPF) complex, which plays a key role in polyadenylation-dependent pre-mRNA 3'-end formation and cooperates with cleavage factors including the CFIA complex and NAB4/CFIB. Negative regulator of poly(A) synthesis. Component of the APT complex, which may be involved in polyadenylation-independent transcript 3'-end formation. REF2 is required for 3'-end formation of snoRNAs. The protein is RNA end formation protein 2 (REF2) of Saccharomyces cerevisiae (strain ATCC 204508 / S288c) (Baker's yeast).